We begin with the raw amino-acid sequence, 85 residues long: UPF0213 protein NP_0776A (85 aa).

The GIY-YIG domain maps to 3 to 78; sequence ADHYVYVLSC…KSLSRAKKER (76 aa). A compositionally biased stretch (basic and acidic residues) spans 58-70; it reads KSAAMQREHEIKS. The disordered stretch occupies residues 58-85; sequence KSAAMQREHEIKSLSRAKKERLVADETG.

Belongs to the UPF0213 family.

The chain is UPF0213 protein NP_0776A from Natronomonas pharaonis (strain ATCC 35678 / DSM 2160 / CIP 103997 / JCM 8858 / NBRC 14720 / NCIMB 2260 / Gabara) (Halobacterium pharaonis).